The primary structure comprises 192 residues: uncharacterized protein (192 aa).

The 132-residue stretch at 29-160 (QRQAAVLVPI…PLDIERKQQR (132 aa)) folds into the Nudix hydrolase domain. A Nudix box motif is present at residues 67–89 (GAADKTDRSIIETALREAQEEVA). Residues E83 and E87 each contribute to the Mg(2+) site.

The protein belongs to the Nudix hydrolase family. PCD1 subfamily. Mn(2+) is required as a cofactor. It depends on Mg(2+) as a cofactor.

Its function is as follows. Probably mediates the hydrolysis of some nucleoside diphosphate derivatives. This is an uncharacterized protein from Pectobacterium atrosepticum (strain SCRI 1043 / ATCC BAA-672) (Erwinia carotovora subsp. atroseptica).